The sequence spans 316 residues: Transaldolase (316 aa).

Lys-132 functions as the Schiff-base intermediate with substrate in the catalytic mechanism.

It belongs to the transaldolase family. Type 1 subfamily. As to quaternary structure, homodimer.

The protein localises to the cytoplasm. It catalyses the reaction D-sedoheptulose 7-phosphate + D-glyceraldehyde 3-phosphate = D-erythrose 4-phosphate + beta-D-fructose 6-phosphate. The protein operates within carbohydrate degradation; pentose phosphate pathway; D-glyceraldehyde 3-phosphate and beta-D-fructose 6-phosphate from D-ribose 5-phosphate and D-xylulose 5-phosphate (non-oxidative stage): step 2/3. Transaldolase is important for the balance of metabolites in the pentose-phosphate pathway. The chain is Transaldolase from Aliivibrio fischeri (strain ATCC 700601 / ES114) (Vibrio fischeri).